The following is a 354-amino-acid chain: Uroporphyrinogen decarboxylase (354 aa).

Residues 27–31, D77, Y154, T209, and H327 each bind substrate; that span reads RQAGR.

This sequence belongs to the uroporphyrinogen decarboxylase family. Homodimer.

It localises to the cytoplasm. It catalyses the reaction uroporphyrinogen III + 4 H(+) = coproporphyrinogen III + 4 CO2. Its pathway is porphyrin-containing compound metabolism; protoporphyrin-IX biosynthesis; coproporphyrinogen-III from 5-aminolevulinate: step 4/4. Catalyzes the decarboxylation of four acetate groups of uroporphyrinogen-III to yield coproporphyrinogen-III. This is Uroporphyrinogen decarboxylase from Klebsiella pneumoniae subsp. pneumoniae (strain ATCC 700721 / MGH 78578).